Reading from the N-terminus, the 297-residue chain is tRNA dimethylallyltransferase (297 aa).

15-22 (GPTASGKS) contacts ATP. Residue 17–22 (TASGKS) participates in substrate binding. Interaction with substrate tRNA regions lie at residues 40-43 (DSMQ) and 164-168 (QRIVR).

The protein belongs to the IPP transferase family. As to quaternary structure, monomer. The cofactor is Mg(2+).

It carries out the reaction adenosine(37) in tRNA + dimethylallyl diphosphate = N(6)-dimethylallyladenosine(37) in tRNA + diphosphate. Catalyzes the transfer of a dimethylallyl group onto the adenine at position 37 in tRNAs that read codons beginning with uridine, leading to the formation of N6-(dimethylallyl)adenosine (i(6)A). The chain is tRNA dimethylallyltransferase from Rhizobium leguminosarum bv. trifolii (strain WSM2304).